A 156-amino-acid chain; its full sequence is Ribosomal RNA large subunit methyltransferase H (156 aa).

Residues Leu-73, Gly-104, and 123-128 (LSKLTL) contribute to the S-adenosyl-L-methionine site.

Belongs to the RNA methyltransferase RlmH family. Homodimer.

It localises to the cytoplasm. It catalyses the reaction pseudouridine(1915) in 23S rRNA + S-adenosyl-L-methionine = N(3)-methylpseudouridine(1915) in 23S rRNA + S-adenosyl-L-homocysteine + H(+). Functionally, specifically methylates the pseudouridine at position 1915 (m3Psi1915) in 23S rRNA. This is Ribosomal RNA large subunit methyltransferase H from Idiomarina loihiensis (strain ATCC BAA-735 / DSM 15497 / L2-TR).